An 89-amino-acid polypeptide reads, in one-letter code: HssA/B-like protein 10 (89 aa).

The protein belongs to the hssA/B family.

The protein is HssA/B-like protein 10 (hssl10) of Dictyostelium discoideum (Social amoeba).